Consider the following 241-residue polypeptide: Lactate utilization protein C (241 aa).

It belongs to the LutC/YkgG family.

Functionally, is involved in L-lactate degradation and allows cells to grow with lactate as the sole carbon source. The sequence is that of Lactate utilization protein C from Geobacillus sp. (strain WCH70).